A 222-amino-acid chain; its full sequence is Capsular polysaccharide type 5 biosynthesis protein cap5A (222 aa).

A run of 2 helical transmembrane segments spans residues 20–40 (ILII…FFVL) and 172–192 (VVNL…YIFF).

The protein belongs to the CpsC/CapA family.

It is found in the cell membrane. In terms of biological role, required for the biosynthesis of type 5 capsular polysaccharide (Cap5/CP5). Might act as the chain-length regulator. This is Capsular polysaccharide type 5 biosynthesis protein cap5A (cap5A) from Staphylococcus aureus (strain Newman).